The following is a 68-amino-acid chain: UPF0435 protein SAB1812c (68 aa).

Belongs to the UPF0435 family.

In Staphylococcus aureus (strain bovine RF122 / ET3-1), this protein is UPF0435 protein SAB1812c.